The primary structure comprises 89 residues: Small ribosomal subunit protein bS20 (89 aa).

The segment at M1–R20 is disordered.

The protein belongs to the bacterial ribosomal protein bS20 family.

Binds directly to 16S ribosomal RNA. This chain is Small ribosomal subunit protein bS20, found in Campylobacter curvus (strain 525.92).